Consider the following 1884-residue polypeptide: Fatty acid synthase subunit alpha (1884 aa).

The disordered stretch occupies residues 91–141 (TPDPAEPPAAEEPKAETGKESAPAASAAAAAATQPAAAVAPPPQSAGPVES). The span at 111 to 129 (SAPAASAAAAAATQPAAAV) shows a compositional bias: low complexity. One can recognise a Carrier domain in the interval 147-222 (VKASLLIHVL…EQFQDTFSGS (76 aa)). S182 bears the O-(pantetheine 4'-phosphoryl)serine mark. A disordered region spans residues 583–613 (TEQTTQDALAIPTGSNTPTEEDELSTASDDD). Residues 584 to 600 (EQTTQDALAIPTGSNTP) show a composition bias toward polar residues. The segment covering 601 to 613 (TEEDELSTASDDD) has biased composition (acidic residues). The segment at 677 to 873 (DKYVLVTGAG…CGAIIGWTRG (197 aa)) is beta-ketoacyl reductase. Residues 1120 to 1660 (IQEVVIQHDL…QKGAQAVVVH (541 aa)) form the Ketosynthase family 3 (KS3) domain. Catalysis depends on for beta-ketoacyl synthase activity residues C1303, H1545, and H1586. D1770, V1771, and E1772 together coordinate Mg(2+). Acetyl-CoA contacts are provided by residues 1770–1772 (DVE), Y1796, S1806, 1815–1825 (EATFKALGVSS), 1839–1842 (RDGN), and 1869–1871 (ISH). Mg(2+) contacts are provided by S1870 and H1871.

It belongs to the thiolase-like superfamily. Fungal fatty acid synthetase subunit alpha family. In terms of assembly, fatty acid synthase is composed of alpha and beta subunits.

It catalyses the reaction acetyl-CoA + n malonyl-CoA + 2n NADPH + 4n H(+) = a long-chain-acyl-CoA + n CoA + n CO2 + 2n NADP(+).. It carries out the reaction a fatty acyl-[ACP] + malonyl-[ACP] + H(+) = a 3-oxoacyl-[ACP] + holo-[ACP] + CO2. The catalysed reaction is a (3R)-hydroxyacyl-[ACP] + NADP(+) = a 3-oxoacyl-[ACP] + NADPH + H(+). Fatty acid synthetase catalyzes the formation of long-chain fatty acids from acetyl-CoA, malonyl-CoA and NADPH. The alpha subunit contains domains for: acyl carrier protein, 3-oxoacyl-[acyl-carrier-protein] reductase, and 3-oxoacyl-[acyl-carrier-protein] synthase. This is Fatty acid synthase subunit alpha (FAS2) from Candida parapsilosis (strain CDC 317 / ATCC MYA-4646) (Yeast).